The primary structure comprises 156 residues: Small ribosomal subunit protein uS7 (156 aa).

It belongs to the universal ribosomal protein uS7 family. In terms of assembly, part of the 30S ribosomal subunit. Contacts proteins S9 and S11.

Its function is as follows. One of the primary rRNA binding proteins, it binds directly to 16S rRNA where it nucleates assembly of the head domain of the 30S subunit. Is located at the subunit interface close to the decoding center, probably blocks exit of the E-site tRNA. The chain is Small ribosomal subunit protein uS7 from Chromobacterium violaceum (strain ATCC 12472 / DSM 30191 / JCM 1249 / CCUG 213 / NBRC 12614 / NCIMB 9131 / NCTC 9757 / MK).